We begin with the raw amino-acid sequence, 62 residues long: Protein UL148D (62 aa).

A helical membrane pass occupies residues 30 to 50 (WWISVAIVIFIGVCLVALMYF).

The protein localises to the host membrane. This Human cytomegalovirus (strain Merlin) (HHV-5) protein is Protein UL148D (UL148D).